A 700-amino-acid polypeptide reads, in one-letter code: ATP-dependent DNA helicase UvrD2 (700 aa).

Residues 10 to 301 (AGLDDQQREA…VRLERDYRST (292 aa)) enclose the UvrD-like helicase ATP-binding domain. ATP is bound by residues 34 to 39 (GTGKTR) and arginine 299. Residues 302 to 553 (PQVVSLANRV…LYVGITRARV (252 aa)) form the UvrD-like helicase C-terminal domain. The disordered stretch occupies residues 565-595 (PGGRQSRKPSRFLNGIAPQTRADPVPGTSRR). One can recognise an HRDC domain in the interval 626–700 (ADVDEELLLQ…DVLQLVRGRT (75 aa)).

Belongs to the helicase family. UvrD subfamily. Mg(2+) serves as cofactor.

It carries out the reaction Couples ATP hydrolysis with the unwinding of duplex DNA by translocating in the 3'-5' direction.. It catalyses the reaction ATP + H2O = ADP + phosphate + H(+). Functionally, DNA-dependent ATPase, stimulated equally by ss- and dsDNA. Has both ATPase and helicase activities. The protein is ATP-dependent DNA helicase UvrD2 (uvrD2) of Mycobacterium bovis (strain ATCC BAA-935 / AF2122/97).